Consider the following 282-residue polypeptide: Putative phosphoenolpyruvate synthase regulatory protein (282 aa).

161-168 (GVSRSGKT) lines the ADP pocket.

This sequence belongs to the pyruvate, phosphate/water dikinase regulatory protein family. PSRP subfamily.

The catalysed reaction is [pyruvate, water dikinase] + ADP = [pyruvate, water dikinase]-phosphate + AMP + H(+). The enzyme catalyses [pyruvate, water dikinase]-phosphate + phosphate + H(+) = [pyruvate, water dikinase] + diphosphate. Its function is as follows. Bifunctional serine/threonine kinase and phosphorylase involved in the regulation of the phosphoenolpyruvate synthase (PEPS) by catalyzing its phosphorylation/dephosphorylation. This Janthinobacterium sp. (strain Marseille) (Minibacterium massiliensis) protein is Putative phosphoenolpyruvate synthase regulatory protein.